A 396-amino-acid chain; its full sequence is Elongation factor Tu (396 aa).

Positions 10–206 (KPHVNVGTIG…VLDTYIPEPE (197 aa)) constitute a tr-type G domain. Residues 19 to 26 (GHVDHGKT) are G1. Residue 19-26 (GHVDHGKT) participates in GTP binding. Residue threonine 26 coordinates Mg(2+). Positions 60–64 (GITIN) are G2. Residues 81–84 (DCPG) form a G3 region. GTP contacts are provided by residues 81 to 85 (DCPGH) and 136 to 139 (NKCD). The tract at residues 136–139 (NKCD) is G4. A G5 region spans residues 174 to 176 (SAT).

The protein belongs to the TRAFAC class translation factor GTPase superfamily. Classic translation factor GTPase family. EF-Tu/EF-1A subfamily. In terms of assembly, monomer.

Its subcellular location is the cytoplasm. It carries out the reaction GTP + H2O = GDP + phosphate + H(+). GTP hydrolase that promotes the GTP-dependent binding of aminoacyl-tRNA to the A-site of ribosomes during protein biosynthesis. This is Elongation factor Tu from Psychrobacter cryohalolentis (strain ATCC BAA-1226 / DSM 17306 / VKM B-2378 / K5).